Here is a 225-residue protein sequence, read N- to C-terminus: Biosynthetic peptidoglycan transglycosylase (225 aa).

Residues 7–27 (SFLFKMVLILLIAPIVLVGVV) form a helical membrane-spanning segment.

Belongs to the glycosyltransferase 51 family.

It localises to the cell inner membrane. The enzyme catalyses [GlcNAc-(1-&gt;4)-Mur2Ac(oyl-L-Ala-gamma-D-Glu-L-Lys-D-Ala-D-Ala)](n)-di-trans,octa-cis-undecaprenyl diphosphate + beta-D-GlcNAc-(1-&gt;4)-Mur2Ac(oyl-L-Ala-gamma-D-Glu-L-Lys-D-Ala-D-Ala)-di-trans,octa-cis-undecaprenyl diphosphate = [GlcNAc-(1-&gt;4)-Mur2Ac(oyl-L-Ala-gamma-D-Glu-L-Lys-D-Ala-D-Ala)](n+1)-di-trans,octa-cis-undecaprenyl diphosphate + di-trans,octa-cis-undecaprenyl diphosphate + H(+). The protein operates within cell wall biogenesis; peptidoglycan biosynthesis. Its function is as follows. Peptidoglycan polymerase that catalyzes glycan chain elongation from lipid-linked precursors. The sequence is that of Biosynthetic peptidoglycan transglycosylase from Vibrio parahaemolyticus serotype O3:K6 (strain RIMD 2210633).